A 444-amino-acid polypeptide reads, in one-letter code: Tol-Pal system protein TolB (444 aa).

Positions 1–19 (MRNIIYFILSLLFSVTSYA) are cleaved as a signal peptide.

Belongs to the TolB family. The Tol-Pal system is composed of five core proteins: the inner membrane proteins TolA, TolQ and TolR, the periplasmic protein TolB and the outer membrane protein Pal. They form a network linking the inner and outer membranes and the peptidoglycan layer.

The protein resides in the periplasm. Its function is as follows. Part of the Tol-Pal system, which plays a role in outer membrane invagination during cell division and is important for maintaining outer membrane integrity. The sequence is that of Tol-Pal system protein TolB from Rickettsia peacockii (strain Rustic).